Here is a 511-residue protein sequence, read N- to C-terminus: Cytochrome P450 71A6 (511 aa).

2 consecutive transmembrane segments (helical) span residues 1-15 and 61-77; these read ILIA…LFFL and VMQL…ASSP. N-linked (GlcNAc...) asparagine glycans are attached at residues asparagine 90, asparagine 96, and asparagine 167. Cysteine 450 is a heme binding site.

This sequence belongs to the cytochrome P450 family. The cofactor is heme.

The protein localises to the membrane. This Nepeta racemosa (Catmint) protein is Cytochrome P450 71A6 (CYP71A6).